The chain runs to 375 residues: F420-dependent formate dehydrogenase 2 subunit beta (375 aa).

2 4Fe-4S ferredoxin-type domains span residues 268–291 and 320–349; these read PEPEKWDEYWSRCIKCYGCRDVCP and IRLSHMSFSCINCGQCEDVCPVEIPLAKIY. The [4Fe-4S] cluster site is built by Cys-280, Cys-283, Cys-286, Cys-290, Cys-329, Cys-332, Cys-335, and Cys-339.

Belongs to the FrhB family. In terms of assembly, dimer of an alpha (FdhA2) and a beta (FdhB2) subunit. Requires [4Fe-4S] cluster as cofactor. It depends on FAD as a cofactor. The cofactor is Zn(2+).

It catalyses the reaction oxidized coenzyme F420-(gamma-L-Glu)(n) + formate + 2 H(+) = reduced coenzyme F420-(gamma-L-Glu)(n) + CO2. Its function is as follows. Catalyzes the oxidation of formate to carbon dioxide, with coenzyme F420 as the electron acceptor. In vitro can also use methyl viologen as electron acceptor. This Methanococcus maripaludis (strain DSM 14266 / JCM 13030 / NBRC 101832 / S2 / LL) protein is F420-dependent formate dehydrogenase 2 subunit beta.